A 213-amino-acid chain; its full sequence is Orotate phosphoribosyltransferase (213 aa).

K26 provides a ligand contact to 5-phospho-alpha-D-ribose 1-diphosphate. 34–35 contributes to the orotate binding site; the sequence is FF. 5-phospho-alpha-D-ribose 1-diphosphate is bound by residues 72–73, R99, K100, K103, H105, and 124–132; these read YK and DDVITAGTA. Residues T128 and R156 each coordinate orotate.

Belongs to the purine/pyrimidine phosphoribosyltransferase family. PyrE subfamily. In terms of assembly, homodimer. Mg(2+) is required as a cofactor.

The enzyme catalyses orotidine 5'-phosphate + diphosphate = orotate + 5-phospho-alpha-D-ribose 1-diphosphate. It functions in the pathway pyrimidine metabolism; UMP biosynthesis via de novo pathway; UMP from orotate: step 1/2. Its function is as follows. Catalyzes the transfer of a ribosyl phosphate group from 5-phosphoribose 1-diphosphate to orotate, leading to the formation of orotidine monophosphate (OMP). This Photobacterium profundum (strain SS9) protein is Orotate phosphoribosyltransferase.